Here is a 447-residue protein sequence, read N- to C-terminus: N-succinylarginine dihydrolase (447 aa).

Residues 19-28 (AGLSFGNEAS), Asn-110, and 137-138 (HR) each bind substrate. Residue Glu-174 is part of the active site. Residue Arg-212 coordinates substrate. The active site involves His-248. The substrate site is built by Asp-250 and Asn-359. The active-site Nucleophile is the Cys-365.

Belongs to the succinylarginine dihydrolase family. Homodimer.

The enzyme catalyses N(2)-succinyl-L-arginine + 2 H2O + 2 H(+) = N(2)-succinyl-L-ornithine + 2 NH4(+) + CO2. It participates in amino-acid degradation; L-arginine degradation via AST pathway; L-glutamate and succinate from L-arginine: step 2/5. Its function is as follows. Catalyzes the hydrolysis of N(2)-succinylarginine into N(2)-succinylornithine, ammonia and CO(2). This chain is N-succinylarginine dihydrolase, found in Escherichia coli O6:H1 (strain CFT073 / ATCC 700928 / UPEC).